Reading from the N-terminus, the 257-residue chain is (R)-2-haloacid dehalogenase (257 aa).

Belongs to the HAD-like hydrolase superfamily. S-2-haloalkanoic acid dehalogenase family.

The catalysed reaction is an (R)-2-haloacid + H2O = a (2S)-2-hydroxycarboxylate + a halide anion + H(+). Its function is as follows. Catalyzes the hydrolytic dehalogenation of small (R)-2-haloalkanoic acids to yield the corresponding (S)-2-hydroxyalkanoic acids. Acts on acids of short chain lengths, C(2) to C(4), with inversion of configuration at C-2. This Rhizobium sp. (strain NHG3) protein is (R)-2-haloacid dehalogenase (dehI).